We begin with the raw amino-acid sequence, 270 residues long: UPF0354 protein BT9727_4425 (270 aa).

Belongs to the UPF0354 family.

This Bacillus thuringiensis subsp. konkukian (strain 97-27) protein is UPF0354 protein BT9727_4425.